We begin with the raw amino-acid sequence, 71 residues long: Ranatuerin-2P (71 aa).

Residues 1 to 20 form the signal peptide; sequence MFTMKKSLLLFFFLGTISLS. Residues 21-44 constitute a propeptide that is removed on maturation; sequence LCEQERGADEDDGVEITEEEVKRG. A disulfide bridge connects residues C66 and C71.

As to expression, expressed by the skin glands.

The protein localises to the secreted. Functionally, antibacterial activity against Gram-positive bacterium S.aureus and Gram-negative bacterium E.coli. Has activity against C.albicans. The polypeptide is Ranatuerin-2P (Lithobates pipiens (Northern leopard frog)).